The primary structure comprises 402 residues: UDP-N-acetylmuramoylalanine--D-glutamate ligase (402 aa).

97-103 (GTNGKTT) serves as a coordination point for ATP.

This sequence belongs to the MurCDEF family.

The protein resides in the cytoplasm. The enzyme catalyses UDP-N-acetyl-alpha-D-muramoyl-L-alanine + D-glutamate + ATP = UDP-N-acetyl-alpha-D-muramoyl-L-alanyl-D-glutamate + ADP + phosphate + H(+). Its pathway is cell wall biogenesis; peptidoglycan biosynthesis. Its function is as follows. Cell wall formation. Catalyzes the addition of glutamate to the nucleotide precursor UDP-N-acetylmuramoyl-L-alanine (UMA). This Campylobacter jejuni subsp. jejuni serotype O:23/36 (strain 81-176) protein is UDP-N-acetylmuramoylalanine--D-glutamate ligase.